The primary structure comprises 223 residues: DNA mismatch repair protein MutH (223 aa).

The protein belongs to the MutH family.

It localises to the cytoplasm. Sequence-specific endonuclease that cleaves unmethylated GATC sequences. It is involved in DNA mismatch repair. This is DNA mismatch repair protein MutH from Shewanella sp. (strain MR-4).